Here is a 295-residue protein sequence, read N- to C-terminus: Tyrosine recombinase XerC (295 aa).

The Core-binding (CB) domain occupies 1-85 (MQNALQKYYD…ALRQFLAYLV (85 aa)). Positions 106-285 (YLPKNIDQEQ…DFKHLTDVYD (180 aa)) constitute a Tyr recombinase domain. Active-site residues include Arg-145, Lys-169, His-237, Arg-240, and His-263. Tyr-272 functions as the O-(3'-phospho-DNA)-tyrosine intermediate in the catalytic mechanism.

It belongs to the 'phage' integrase family. XerC subfamily. In terms of assembly, forms a cyclic heterotetrameric complex composed of two molecules of XerC and two molecules of XerD.

It is found in the cytoplasm. Functionally, site-specific tyrosine recombinase, which acts by catalyzing the cutting and rejoining of the recombining DNA molecules. The XerC-XerD complex is essential to convert dimers of the bacterial chromosome into monomers to permit their segregation at cell division. It also contributes to the segregational stability of plasmids. The chain is Tyrosine recombinase XerC from Actinobacillus succinogenes (strain ATCC 55618 / DSM 22257 / CCUG 43843 / 130Z).